Consider the following 509-residue polypeptide: CDK5RAP3 protein homolog (509 aa).

Belongs to the CDK5RAP3 family.

It localises to the nucleus. Its subcellular location is the cytoplasm. Its function is as follows. Substrate adapter of E3 ligase complexes mediating ufmylation, the covalent attachment of the ubiquitin-like modifier UFM1 to substrate proteins, and which is involved in various processes, such as ribosome recycling and reticulophagy (also called ER-phagy). This chain is CDK5RAP3 protein homolog, found in Drosophila melanogaster (Fruit fly).